A 383-amino-acid chain; its full sequence is tRNA-specific 2-thiouridylase MnmA (383 aa).

Residues 16-23 (AMSGGVDS) and leucine 42 each bind ATP. Catalysis depends on cysteine 110, which acts as the Nucleophile. The cysteines at positions 110 and 209 are disulfide-linked. Residue glycine 134 participates in ATP binding. Residues 159-161 (KDQ) are interaction with tRNA. Residue cysteine 209 is the Cysteine persulfide intermediate of the active site.

The protein belongs to the MnmA/TRMU family.

It is found in the cytoplasm. It carries out the reaction S-sulfanyl-L-cysteinyl-[protein] + uridine(34) in tRNA + AH2 + ATP = 2-thiouridine(34) in tRNA + L-cysteinyl-[protein] + A + AMP + diphosphate + H(+). Functionally, catalyzes the 2-thiolation of uridine at the wobble position (U34) of tRNA, leading to the formation of s(2)U34. In Caulobacter vibrioides (strain ATCC 19089 / CIP 103742 / CB 15) (Caulobacter crescentus), this protein is tRNA-specific 2-thiouridylase MnmA.